A 715-amino-acid chain; its full sequence is Formate dehydrogenase H (715 aa).

In terms of domain architecture, 4Fe-4S Mo/W bis-MGD-type spans 1–56; sequence MKKVVTVCPYCASGCKINLVVDNGKIVRAEAAQGKTNQGTLCLKGYYGWDFINDTQ. [4Fe-4S] cluster-binding residues include Cys8, Cys11, Cys15, and Cys42. Catalysis depends on Lys44, which acts as the Electron donor/acceptor. Mo-bis(molybdopterin guanine dinucleotide)-binding residues include Arg110, Sec140, Asn176, Asp179, Ser180, Cys201, Asp202, Arg204, Gly221, Asn223, Met297, Gln335, Asp404, Thr408, Gln428, Asp429, Ser445, Asp478, Arg581, Glu582, His585, Ser587, Tyr678, and Lys679. The active-site Proton donor/acceptor is Sec140. A non-standard amino acid (selenocysteine) is located at residue Sec140.

Belongs to the prokaryotic molybdopterin-containing oxidoreductase family. Consists of two separable enzymatic activities: a formate dehydrogenase component (FDH-H) and hydrogenase-3. The cofactor is [4Fe-4S] cluster. Mo-bis(molybdopterin guanine dinucleotide) is required as a cofactor.

The enzyme catalyses formate + A + H(+) = AH2 + CO2. Inhibited by aerobic conditions. In terms of biological role, decomposes formic acid to hydrogen and carbon dioxide under anaerobic conditions in the absence of exogenous electron acceptors. The protein is Formate dehydrogenase H (fdhF) of Escherichia coli (strain K12).